A 256-amino-acid polypeptide reads, in one-letter code: Protein RKD4 (256 aa).

In terms of domain architecture, RWP-RK spans 130-216 (EKVTVKKKRN…MEEEVKNLEE (87 aa)). The stretch at 190–224 (RKLKSLNSLIKNLKNVGMEEEVKNLEEHRFLIEQE) forms a coiled coil.

The protein resides in the nucleus. In terms of biological role, putative transcription factor. This Arabidopsis thaliana (Mouse-ear cress) protein is Protein RKD4 (RKD4).